Consider the following 1338-residue polypeptide: Insulin receptor substrate 2 (1338 aa).

The span at 1–12 (MASPPRHGPPGP) shows a compositional bias: pro residues. Disordered regions lie at residues 1 to 31 (MASP…NHSV) and 49 to 72 (VLRG…QPPR). Positions 16–144 (DGPNLNNNNN…WYRALTDLVS (129 aa)) constitute a PH domain. The span at 19-28 (NLNNNNNNNN) shows a compositional bias: low complexity. Residues 53 to 66 (PGAGGDEATAGGGS) are compositionally biased toward gly residues. The IRS-type PTB domain occupies 194–298 (YREVWQVNLK…EAMKALKELF (105 aa)). The tract at residues 303-411 (RSKSQSSGSS…SHTLSGGCGG (109 aa)) is disordered. Phosphoserine is present on residues Ser306 and Ser346. Thr350 carries the post-translational modification Phosphothreonine. Phosphoserine occurs at positions 365, 384, 388, and 391. Arg412 carries the post-translational modification Omega-N-methylarginine. A disordered region spans residues 428-537 (SRSMSMPVAH…PPARDGGGGG (110 aa)). The span at 444-453 (SPGSLSSSSG) shows a compositional bias: low complexity. Residues 459 to 471 (YPPPPGPHPPLPH) are compositionally biased toward pro residues. A compositionally biased stretch (low complexity) spans 475 to 493 (HGPGQRPSSGSASASGSPS). Thr520 carries the phosphothreonine modification. Phosphoserine is present on Ser523. Thr527 is modified (phosphothreonine). Tyr540 carries the post-translational modification Phosphotyrosine; by INSR. The YXXM motif 1 signature appears at 540-543 (YGYM). Ser560 is modified (phosphoserine; by PLK1). Ser577 carries the phosphoserine modification. Phosphothreonine occurs at positions 579 and 580. Ser594 carries the phosphoserine modification. A YXXM motif 2 motif is present at residues 598 to 601 (YTLM). Ser608 and Ser620 each carry phosphoserine. 2 positions are modified to phosphotyrosine; by INSR: Tyr653 and Tyr675. 2 short sequence motifs (YXXM motif) span residues 653-656 (YMPM) and 675-678 (YMPM). Phosphoserine is present on residues Ser679 and Ser682. Over residues 703–719 (PSAGPAGPAPTSAAGRT) the composition is skewed to low complexity. The disordered stretch occupies residues 703-739 (PSAGPAGPAPTSAAGRTFPASGGGYKASSPAESSPED). Residues Ser735 and Ser736 each carry the phosphoserine modification. The short motif at 742–745 (YMRM) is the YXXM motif 5 element. Ser770 bears the Phosphoserine mark. A Phosphothreonine modification is found at Thr779. Phosphoserine is present on Ser805. The short motif at 823-826 (YVLM) is the YXXM motif 6 element. Phosphoserine is present on Ser828. The disordered stretch occupies residues 840 to 1101 (EPQATPGPSQ…KPEAARVASP (262 aa)). Residues 859–870 (TQPPHPVVPSPV) show a composition bias toward pro residues. Ser915 is subject to Phosphoserine. Position 919 is a phosphotyrosine; by INSR (Tyr919). The span at 938-967 (LLASAASSSSLLSASSPASSLGSGTPGTSS) shows a compositional bias: low complexity. Position 973 is a phosphoserine (Ser973). Residue Tyr978 is modified to Phosphotyrosine; by INSR. Positions 1013 to 1022 (PYPPLPPRPS) are enriched in pro residues. A YXXM motif 7 motif is present at residues 1072–1075 (YTEM). Thr1082 carries the post-translational modification Phosphothreonine. Pro residues predominate over residues 1083–1093 (PPQPIAAPPKP). Ser1100 carries the phosphoserine modification. Ser1109 carries the post-translational modification Phosphoserine; by PLK1. A disordered region spans residues 1121 to 1296 (LQASQPPDPH…TRSLGGLISA (176 aa)). Positions 1150-1165 (ETFSSTTTVTPVSPSF) are enriched in low complexity. Phosphothreonine is present on Thr1159. Residues Ser1162, Ser1174, Ser1176, and Ser1186 each carry the phosphoserine modification. The segment covering 1174–1183 (SASVENVSLR) has biased composition (polar residues). A compositionally biased stretch (gly residues) spans 1188–1198 (GGVGVGPGGGD). Ser1203 bears the Phosphoserine mark. The segment covering 1224–1236 (QPGGLVGCPGSGG) has biased composition (gly residues). The residue at position 1253 (Tyr1253) is a Phosphotyrosine; by INSR. The segment covering 1263-1277 (GLPPQPQPPPPPLPQ) has biased composition (pro residues). Lys1331 is covalently cross-linked (Glycyl lysine isopeptide (Lys-Gly) (interchain with G-Cter in ubiquitin)).

As to quaternary structure, interacts with PHIP. Interacts with SH2B1; this interaction enhances leptin-induced activation of the PI3-kinase pathway. Interacts with GRB2. Interacts with PIK3R1. Interacts with DVL2; this interaction promotes the Wnt/beta-catenin signaling pathway. Post-translationally, phosphorylation fluctuates in a cell-cycle dependent manner with hyperphosphorylation during mitosis. Phosphorylated at Ser-560 and Ser-1109 by PLK1; these phosphorylations prevent the activation of the PI3K pathway upon growth factor stimulation by inhibiting the binding between IRS2 and the PI3K pathway components and increasing the level of IRS2 protein degradation. In addition, they prevent premature mitotic exit. In terms of processing, monoubiquitinated by NEDD4; leading to enhanced IGF1 signaling. During cell cycle, ubiquitination and proteasomal degradation are controlled by FZR1.

It localises to the cytoplasm. The protein resides in the cytosol. In terms of biological role, signaling adapter protein that participates in the signal transduction from two prominent receptor tyrosine kinases, insulin receptor/INSR and insulin-like growth factor I receptor/IGF1R. Plays therefore an important role in development, growth, glucose homeostasis as well as lipid metabolism. Upon phosphorylation by the insulin receptor, functions as a signaling scaffold that propagates insulin action through binding to SH2 domain-containing proteins including the p85 regulatory subunit of PI3K, NCK1, NCK2, GRB2 or SHP2. Recruitment of GRB2 leads to the activation of the guanine nucleotide exchange factor SOS1 which in turn triggers the Ras/Raf/MEK/MAPK signaling cascade. Activation of the PI3K/AKT pathway is responsible for most of insulin metabolic effects in the cell, and the Ras/Raf/MEK/MAPK is involved in the regulation of gene expression and in cooperation with the PI3K pathway regulates cell growth and differentiation. Acts a positive regulator of the Wnt/beta-catenin signaling pathway through suppression of DVL2 autophagy-mediated degradation leading to cell proliferation. Plays a role in cell cycle progression by promoting a robust spindle assembly checkpoint (SAC) during M-phase. In macrophages, IL4-induced tyrosine phosphorylation of IRS2 leads to the recruitment and activation of phosphoinositide 3-kinase (PI3K). The chain is Insulin receptor substrate 2 (IRS2) from Homo sapiens (Human).